The sequence spans 231 residues: GDSL lipase Rv0518 (231 aa).

Residues 1-20 (MSRPGTYVIGLTLLVGLVVG) form the signal peptide. Serine 46 acts as the Nucleophile in catalysis. Aspartate 205 functions as the Proton donor in the catalytic mechanism. Catalysis depends on histidine 208, which acts as the Proton acceptor.

This sequence belongs to the 'GDSL' lipolytic enzyme family.

The protein localises to the secreted. It localises to the cell wall. It is found in the extracellular space. It catalyses the reaction a fatty acid ester + H2O = an aliphatic alcohol + a fatty acid + H(+). It carries out the reaction decanoate ester + H2O = decanoate + an aliphatic alcohol + H(+). The catalysed reaction is an octanoate ester + H2O = an aliphatic alcohol + octanoate + H(+). The enzyme catalyses a dodecanoate ester + H2O = an aliphatic alcohol + dodecanoate + H(+). It catalyses the reaction a tetradecanoate ester + H2O = an aliphatic alcohol + tetradecanoate + H(+). Activity is inhibited by the serine modifier phenylmethylsulfonyl fluoride (PMSF). Functionally, GDSL lipase that catalyzes the hydrolysis of p-nitrophenyl (pNP) esters. pNP-decanoate (C10) is the preferred substrate. It can also use pNP-octanoate (C8), pNP-dodecanoate (C12) and pNP-tetradecanoate (C14). Has lower activity with pNP-butyrate (C4), pNP-palmitate (C16) and pNP-stearate (C18). Does not show phospholipase A1 activity. Might help bacteria to utilize available lipids for its growth as well as provide resistance to various intracellular stresses by cell wall modulation resulting in enhanced intracellular survival. The chain is GDSL lipase Rv0518 from Mycobacterium tuberculosis (strain ATCC 25618 / H37Rv).